The sequence spans 305 residues: Axin interactor, dorsalization-associated protein (305 aa).

Residues 27–62 are a coiled coil; it reads QLVEAIDEYQILARHLQKEAQAQHNNSEFTEEQKKT. The span at 128–137 shows a compositional bias: acidic residues; that stretch reads NLEFEEDEEG. The disordered stretch occupies residues 128–150; that stretch reads NLEFEEDEEGGAGAGPPDSFSAR. The axin-binding stretch occupies residues 153-220; that stretch reads GTLLPRLPSE…RKEDTYVHFN (68 aa). Residues 156 to 303 form the C2 Aida-type domain; it reads LPRLPSEPGM…LYLHLHQSLH (148 aa).

The protein belongs to the AIDA family. As to quaternary structure, interacts with AXIN1.

Its function is as follows. Acts as a ventralizing factor during embryogenesis. Inhibits axin-mediated JNK activation by binding axin and disrupting axin homodimerization. This in turn antagonizes a Wnt/beta-catenin-independent dorsalization pathway activated by AXIN/JNK-signaling. The chain is Axin interactor, dorsalization-associated protein (Aida) from Mus musculus (Mouse).